Consider the following 286-residue polypeptide: Bifunctional protein FolD (286 aa).

NADP(+)-binding positions include 164–166 (GTS) and Ile-230.

It belongs to the tetrahydrofolate dehydrogenase/cyclohydrolase family. Homodimer.

The enzyme catalyses (6R)-5,10-methylene-5,6,7,8-tetrahydrofolate + NADP(+) = (6R)-5,10-methenyltetrahydrofolate + NADPH. The catalysed reaction is (6R)-5,10-methenyltetrahydrofolate + H2O = (6R)-10-formyltetrahydrofolate + H(+). It participates in one-carbon metabolism; tetrahydrofolate interconversion. In terms of biological role, catalyzes the oxidation of 5,10-methylenetetrahydrofolate to 5,10-methenyltetrahydrofolate and then the hydrolysis of 5,10-methenyltetrahydrofolate to 10-formyltetrahydrofolate. In Mesoplasma florum (strain ATCC 33453 / NBRC 100688 / NCTC 11704 / L1) (Acholeplasma florum), this protein is Bifunctional protein FolD.